The primary structure comprises 108 residues: Large ribosomal subunit protein eL33A (108 aa).

The protein belongs to the eukaryotic ribosomal protein eL33 family. As to quaternary structure, component of the large ribosomal subunit (LSU). Mature yeast ribosomes consist of a small (40S) and a large (60S) subunit. The 40S small subunit contains 1 molecule of ribosomal RNA (18S rRNA) and at least 33 different proteins. The large 60S subunit contains 3 rRNA molecules (25S, 5.8S and 5S rRNA) and at least 46 different proteins.

It is found in the cytoplasm. Its subcellular location is the nucleus. It localises to the nucleolus. In terms of biological role, component of the ribosome, a large ribonucleoprotein complex responsible for the synthesis of proteins in the cell. The small ribosomal subunit (SSU) binds messenger RNAs (mRNAs) and translates the encoded message by selecting cognate aminoacyl-transfer RNA (tRNA) molecules. The large subunit (LSU) contains the ribosomal catalytic site termed the peptidyl transferase center (PTC), which catalyzes the formation of peptide bonds, thereby polymerizing the amino acids delivered by tRNAs into a polypeptide chain. The nascent polypeptides leave the ribosome through a tunnel in the LSU and interact with protein factors that function in enzymatic processing, targeting, and the membrane insertion of nascent chains at the exit of the ribosomal tunnel. The protein is Large ribosomal subunit protein eL33A (rpl35b) of Schizosaccharomyces pombe (strain 972 / ATCC 24843) (Fission yeast).